Reading from the N-terminus, the 67-residue chain is Conotoxin mr3d (67 aa).

A signal peptide spans 1 to 19 (MSKLGILLTICLLLFPLTA). A propeptide spanning residues 20-52 (VPLDGDQPADRPAERMQDDISSEHHPFFDPVKR) is cleaved from the precursor. Cystine bridges form between C53-C65, C54-C62, and C58-C66. Position 64 is a 4-hydroxyproline; partial (P64). The residue at position 66 (C66) is a Cysteine amide; partial.

This sequence belongs to the conotoxin M superfamily. Post-translationally, has been found to be hydroxylated and amidated by Han et al. (2006), and to be unmodified by Ju et al. (2022). In terms of tissue distribution, expressed by the venom duct.

The protein localises to the secreted. The sequence is that of Conotoxin mr3d from Conus marmoreus (Marble cone).